The chain runs to 704 residues: Elongation factor G (704 aa).

In terms of domain architecture, tr-type G spans 8–291 (DKVRNIGIMA…AVVDYLASPL (284 aa)). GTP-binding positions include 17 to 24 (AHIDAGKT), 90 to 94 (DTPGH), and 144 to 147 (NKMD).

It belongs to the TRAFAC class translation factor GTPase superfamily. Classic translation factor GTPase family. EF-G/EF-2 subfamily.

Its subcellular location is the cytoplasm. Functionally, catalyzes the GTP-dependent ribosomal translocation step during translation elongation. During this step, the ribosome changes from the pre-translocational (PRE) to the post-translocational (POST) state as the newly formed A-site-bound peptidyl-tRNA and P-site-bound deacylated tRNA move to the P and E sites, respectively. Catalyzes the coordinated movement of the two tRNA molecules, the mRNA and conformational changes in the ribosome. The chain is Elongation factor G from Chlorobium luteolum (strain DSM 273 / BCRC 81028 / 2530) (Pelodictyon luteolum).